We begin with the raw amino-acid sequence, 923 residues long: Neuropilin-1 (923 aa).

A signal peptide spans 1-21 (MERGLPLLCAVLALVLAPAGA). Over 22-856 (FRNDKCGDTI…PGNVLKTLDP (835 aa)) the chain is Extracellular. 3 disulfide bridges follow: Cys-27-Cys-54, Cys-82-Cys-104, and Cys-147-Cys-173. CUB domains follow at residues 27 to 141 (CGDT…YEIF) and 147 to 265 (CSQN…YSVL). A glycan (N-linked (GlcNAc...) asparagine) is linked at Asn-150. Ca(2+) contacts are provided by Glu-195, Asp-209, and Asp-250. The cysteines at positions 206 and 228 are disulfide-linked. N-linked (GlcNAc...) asparagine glycans are attached at residues Asn-261, Asn-300, and Asn-522. Cystine bridges form between Cys-275-Cys-424 and Cys-431-Cys-583. 2 consecutive F5/8 type C domains span residues 275–424 (CMEA…VYGC) and 431–583 (CSGM…LLGC). Ser-612 carries an O-linked (Xyl...) (chondroitin sulfate) serine; alternate glycan. O-linked (Xyl...) (heparan sulfate) serine; alternate glycosylation occurs at Ser-612. An MAM domain is found at 645-811 (TYGFNCEFGW…NHISQEDCAK (167 aa)). Residues 820–845 (PEIKIDETGSTPGYEGEGEGDKNISR) are disordered. Ser-829 carries an O-linked (Xyl...) (chondroitin sulfate) serine glycan. Asn-842 carries an N-linked (GlcNAc...) asparagine glycan. A helical transmembrane segment spans residues 857–879 (ILITIIAMSALGVLLGAVCGVVL). Residues 880-923 (YCACWHNGMSERNLSALENYNFELVDGVKLKKDKLNTQSTYSEA) lie on the Cytoplasmic side of the membrane. A Phosphoserine modification is found at Ser-894.

Belongs to the neuropilin family. As to quaternary structure, homodimer, and heterodimer with NRP2. Interacts with FER. Interacts with PLXNB1. Interacts with VEGFA. Interacts with ABCB8/MITOSUR in mitochondria. In terms of assembly, (Microbial infection) Interacts with SARS coronavirus-2/SARS-CoV-2 spike protein S1 (via the CendR motif RRAR). The expression of isoforms 1 and 2 does not seem to overlap. Expressed in olfactory epithelium (at protein level). Expressed in fibroblasts (at protein level). Expressed by the blood vessels of different tissues. In the developing embryo it is found predominantly in the nervous system. In adult tissues, it is highly expressed in heart and placenta; moderately in lung, liver, skeletal muscle, kidney and pancreas; and low in adult brain. Expressed in the central nervous system, including olfactory related regions such as the olfactory tubercles and paraolfactory gyri. In terms of tissue distribution, the expression of isoforms 1 and 2 does not seem to overlap. Found in liver hepatocytes, kidney distal and proximal tubules.

The protein localises to the secreted. It localises to the mitochondrion membrane. Its subcellular location is the cell membrane. It is found in the cytoplasm. Its function is as follows. Cell-surface receptor involved in the development of the cardiovascular system, in angiogenesis, in the formation of certain neuronal circuits and in organogenesis outside the nervous system. Mediates the chemorepulsant activity of semaphorins. Recognizes a C-end rule (CendR) motif R/KXXR/K on its ligands which causes cellular internalization and vascular leakage. It binds to semaphorin 3A, the PLGF-2 isoform of PGF, the VEGF165 isoform of VEGFA and VEGFB. Coexpression with KDR results in increased VEGF165 binding to KDR as well as increased chemotaxis. Regulates VEGF-induced angiogenesis. Binding to VEGFA initiates a signaling pathway needed for motor neuron axon guidance and cell body migration, including for the caudal migration of facial motor neurons from rhombomere 4 to rhombomere 6 during embryonic development. Regulates mitochondrial iron transport via interaction with ABCB8/MITOSUR. In terms of biological role, (Microbial infection) Acts as a host factor for human coronavirus SARS-CoV-2 infection. Recognizes and binds to CendR motif RRAR on SARS-CoV-2 spike protein S1 which enhances SARS-CoV-2 infection. Binds VEGF-165 and may inhibit its binding to cells. May induce apoptosis by sequestering VEGF-165. May bind as well various members of the semaphorin family. Its expression has an averse effect on blood vessel number and integrity. This chain is Neuropilin-1, found in Homo sapiens (Human).